Reading from the N-terminus, the 82-residue chain is Sec-independent protein translocase protein TatA (82 aa).

A helical membrane pass occupies residues 1 to 21 (MGSFSIWHWLIVLLIVVMVFG). Residues 46–82 (GASTDDSATTSAPAGQVTNNSAAADKTTIDVEAKHKS) form a disordered region. The span at 49 to 67 (TDDSATTSAPAGQVTNNSA) shows a compositional bias: polar residues. A compositionally biased stretch (basic and acidic residues) spans 72 to 82 (TTIDVEAKHKS).

Belongs to the TatA/E family. In terms of assembly, the Tat system comprises two distinct complexes: a TatABC complex, containing multiple copies of TatA, TatB and TatC subunits, and a separate TatA complex, containing only TatA subunits. Substrates initially bind to the TatABC complex, which probably triggers association of the separate TatA complex to form the active translocon.

The protein resides in the cell inner membrane. Functionally, part of the twin-arginine translocation (Tat) system that transports large folded proteins containing a characteristic twin-arginine motif in their signal peptide across membranes. TatA could form the protein-conducting channel of the Tat system. This is Sec-independent protein translocase protein TatA from Acidovorax ebreus (strain TPSY) (Diaphorobacter sp. (strain TPSY)).